Here is a 217-residue protein sequence, read N- to C-terminus: Elongation factor Ts (217 aa).

The segment at 82–85 (TDFV) is involved in Mg(2+) ion dislocation from EF-Tu.

Belongs to the EF-Ts family.

It is found in the cytoplasm. Its function is as follows. Associates with the EF-Tu.GDP complex and induces the exchange of GDP to GTP. It remains bound to the aminoacyl-tRNA.EF-Tu.GTP complex up to the GTP hydrolysis stage on the ribosome. The sequence is that of Elongation factor Ts from Synechococcus sp. (strain RCC307).